The chain runs to 404 residues: Argininosuccinate synthase (404 aa).

Residues 12–20 and Ala-39 contribute to the ATP site; that span reads AYSGGLDTS. The L-citrulline site is built by Tyr-91 and Ser-96. Gly-121 contributes to the ATP binding site. L-aspartate-binding residues include Thr-123, Asn-127, and Asp-128. Asn-127 is an L-citrulline binding site. L-citrulline-binding residues include Arg-131, Ser-180, Ser-189, Glu-265, and Tyr-277.

Belongs to the argininosuccinate synthase family. Type 1 subfamily. In terms of assembly, homotetramer.

The protein resides in the cytoplasm. It carries out the reaction L-citrulline + L-aspartate + ATP = 2-(N(omega)-L-arginino)succinate + AMP + diphosphate + H(+). It functions in the pathway amino-acid biosynthesis; L-arginine biosynthesis; L-arginine from L-ornithine and carbamoyl phosphate: step 2/3. The sequence is that of Argininosuccinate synthase from Vibrio campbellii (strain ATCC BAA-1116).